The primary structure comprises 231 residues: Cytidylate kinase (231 aa).

18 to 26 (GPSGTGKSS) serves as a coordination point for ATP.

Belongs to the cytidylate kinase family. Type 1 subfamily.

The protein localises to the cytoplasm. It carries out the reaction CMP + ATP = CDP + ADP. The catalysed reaction is dCMP + ATP = dCDP + ADP. The polypeptide is Cytidylate kinase (Streptomyces griseus subsp. griseus (strain JCM 4626 / CBS 651.72 / NBRC 13350 / KCC S-0626 / ISP 5235)).